Here is a 229-residue protein sequence, read N- to C-terminus: 2,3-bisphosphoglycerate-dependent phosphoglycerate mutase (229 aa).

Residues 7–14 (RHGQSEWN), 20–21 (TG), R59, 86–89 (ERHY), K97, 113–114 (RR), and 182–183 (GN) contribute to the substrate site. H8 acts as the Tele-phosphohistidine intermediate in catalysis. The active-site Proton donor/acceptor is the E86.

This sequence belongs to the phosphoglycerate mutase family. BPG-dependent PGAM subfamily.

The enzyme catalyses (2R)-2-phosphoglycerate = (2R)-3-phosphoglycerate. Its pathway is carbohydrate degradation; glycolysis; pyruvate from D-glyceraldehyde 3-phosphate: step 3/5. Catalyzes the interconversion of 2-phosphoglycerate and 3-phosphoglycerate. In Listeria monocytogenes serotype 4a (strain HCC23), this protein is 2,3-bisphosphoglycerate-dependent phosphoglycerate mutase.